Consider the following 505-residue polypeptide: Lysine--tRNA ligase (505 aa).

Positions 1–11 (MSDQQLDQPSL) are enriched in polar residues. The tract at residues 1–23 (MSDQQLDQPSLSHEERQHEENKL) is disordered. A compositionally biased stretch (basic and acidic residues) spans 12 to 23 (SHEERQHEENKL). Mg(2+) contacts are provided by Glu415 and Glu422.

It belongs to the class-II aminoacyl-tRNA synthetase family. Homodimer. Mg(2+) serves as cofactor.

It localises to the cytoplasm. The enzyme catalyses tRNA(Lys) + L-lysine + ATP = L-lysyl-tRNA(Lys) + AMP + diphosphate. This Ectopseudomonas mendocina (strain ymp) (Pseudomonas mendocina) protein is Lysine--tRNA ligase.